Consider the following 61-residue polypeptide: Bacteriocin leucocin-A (61 aa).

A propeptide spanning residues 1–24 is cleaved from the precursor; sequence MMNMKPTESYEQLDNSALEQVVGG. Cysteines 33 and 38 form a disulfide.

Belongs to the bacteriocin class IIA/YGNGV family.

The protein localises to the secreted. Its function is as follows. Inhibits a wide spectrum of lactic acid bacteria. This Leuconostoc gelidum protein is Bacteriocin leucocin-A (lcnA).